Consider the following 444-residue polypeptide: MEVKAKQLDSVNATASVKIPSGMIKSEVENLAKKASKSVKMDGFRPGKVPVSAVLKRYERELTQDAEQNLFKSAVNSALQELKKESKELVGEPYFEKFDRKDGEIIAELILSFKPEIKLDGYEKLIPEYQTPKVSKKEIDEKKDELLKRFATPEAIKTKRVLKEGDFAKFDFEGFVDDKAFEGGKAENYVLEIGSKQFIPGFEDGMVGMKIGEEKDIKVTFPKEYGAAHLAGKDAVFKVKLHEIQELKIPELDDEMLKKLLPGEEKASVEVLDEKLKEQIKNEKLFKLVNDELKGKFADALIEKYNFDLPKGIVEQETDMQMRAAFNTFSEKEIEELKASKEKYQEKRDSFKEEAQKSVKLTFIIDELAKLRKIEVNDQELIQAIYFEAYRYGMNPKEHLENYKKQGALPAVKMALIEEKLFNDIFMPKTEKSEKASKKEKEDK.

The region spanning 165–250 (GDFAKFDFEG…LHEIQELKIP (86 aa)) is the PPIase FKBP-type domain.

The protein belongs to the FKBP-type PPIase family. Tig subfamily.

It is found in the cytoplasm. The catalysed reaction is [protein]-peptidylproline (omega=180) = [protein]-peptidylproline (omega=0). Functionally, involved in protein export. Acts as a chaperone by maintaining the newly synthesized protein in an open conformation. Functions as a peptidyl-prolyl cis-trans isomerase. This Campylobacter jejuni subsp. jejuni serotype O:6 (strain 81116 / NCTC 11828) protein is Trigger factor.